Here is a 149-residue protein sequence, read N- to C-terminus: uncharacterized protein (149 aa).

It to Rhizobium NGR234A y4oM.

This is an uncharacterized protein from Sinorhizobium fredii (strain NBRC 101917 / NGR234).